A 460-amino-acid chain; its full sequence is Adenylosuccinate lyase (460 aa).

N(6)-(1,2-dicarboxyethyl)-AMP contacts are provided by residues R15–Y16, N88–D90, and T120–S121. The active-site Proton donor/acceptor is the H169. Q245 serves as a coordination point for N(6)-(1,2-dicarboxyethyl)-AMP. S293 (proton donor/acceptor) is an active-site residue. N(6)-(1,2-dicarboxyethyl)-AMP contacts are provided by residues S294, K299 to N301, N307, R333, and S338 to R342.

The protein belongs to the lyase 1 family. Adenylosuccinate lyase subfamily. In terms of assembly, homotetramer. Residues from neighboring subunits contribute catalytic and substrate-binding residues to each active site.

The catalysed reaction is N(6)-(1,2-dicarboxyethyl)-AMP = fumarate + AMP. It carries out the reaction (2S)-2-[5-amino-1-(5-phospho-beta-D-ribosyl)imidazole-4-carboxamido]succinate = 5-amino-1-(5-phospho-beta-D-ribosyl)imidazole-4-carboxamide + fumarate. The protein operates within purine metabolism; AMP biosynthesis via de novo pathway; AMP from IMP: step 2/2. It participates in purine metabolism; IMP biosynthesis via de novo pathway; 5-amino-1-(5-phospho-D-ribosyl)imidazole-4-carboxamide from 5-amino-1-(5-phospho-D-ribosyl)imidazole-4-carboxylate: step 2/2. In terms of biological role, catalyzes two reactions in de novo purine nucleotide biosynthesis. Catalyzes the breakdown of 5-aminoimidazole- (N-succinylocarboxamide) ribotide (SAICAR or 2-[5-amino-1-(5-phospho-beta-D-ribosyl)imidazole-4-carboxamido]succinate) to 5-aminoimidazole-4-carboxamide ribotide (AICAR or 5-amino-1-(5-phospho-beta-D-ribosyl)imidazole-4-carboxamide) and fumarate, and of adenylosuccinate (ADS or N(6)-(1,2-dicarboxyethyl)-AMP) to adenosine monophosphate (AMP) and fumarate. In Buchnera aphidicola subsp. Baizongia pistaciae (strain Bp), this protein is Adenylosuccinate lyase (purB).